A 285-amino-acid chain; its full sequence is Chalcone synthase 6-4 (285 aa).

Cys-60 is a catalytic residue.

The protein belongs to the thiolase-like superfamily. Chalcone/stilbene synthases family.

The catalysed reaction is (E)-4-coumaroyl-CoA + 3 malonyl-CoA + 3 H(+) = 2',4,4',6'-tetrahydroxychalcone + 3 CO2 + 4 CoA. The protein operates within secondary metabolite biosynthesis; flavonoid biosynthesis. The primary product of this enzyme is 4,2',4',6'-tetrahydroxychalcone (also termed naringenin-chalcone or chalcone) which can under specific conditions spontaneously isomerize into naringenin. This chain is Chalcone synthase 6-4 (CHS6-4), found in Medicago sativa (Alfalfa).